A 233-amino-acid polypeptide reads, in one-letter code: Large ribosomal subunit protein uL1 (233 aa).

The protein belongs to the universal ribosomal protein uL1 family. Part of the 50S ribosomal subunit.

Binds directly to 23S rRNA. The L1 stalk is quite mobile in the ribosome, and is involved in E site tRNA release. In terms of biological role, protein L1 is also a translational repressor protein, it controls the translation of the L11 operon by binding to its mRNA. This Laribacter hongkongensis (strain HLHK9) protein is Large ribosomal subunit protein uL1.